A 196-amino-acid chain; its full sequence is MARADKATAVADIAEQFKEATATLITEYRGLTVANLAELRRSLSGAATYSVAKNTLVKRAASEAGIEGLDELFAGPTAIAFVTGEPVDAAKAIKTFAKEHKALVIKGGYMDGRALSVAEVERIADLESREVLLAKLAGAMKGNLAKAAGLFNAPASQVARLAAALQEKKAAEGPAEAPQPATEPPAEAPEAPADAE.

Positions 167–196 (EKKAAEGPAEAPQPATEPPAEAPEAPADAE) are disordered.

This sequence belongs to the universal ribosomal protein uL10 family. In terms of assembly, part of the ribosomal stalk of the 50S ribosomal subunit. The N-terminus interacts with L11 and the large rRNA to form the base of the stalk. The C-terminus forms an elongated spine to which L12 dimers bind in a sequential fashion forming a multimeric L10(L12)X complex.

Forms part of the ribosomal stalk, playing a central role in the interaction of the ribosome with GTP-bound translation factors. The chain is Large ribosomal subunit protein uL10 from Mycolicibacterium paratuberculosis (strain ATCC BAA-968 / K-10) (Mycobacterium paratuberculosis).